Here is a 96-residue protein sequence, read N- to C-terminus: Antigen H4 (96 aa).

The interval 1–20 (EFQEEIKEGVEEHKHEDDPE) is disordered. N34 carries N-linked (GlcNAc...) asparagine glycosylation.

The polypeptide is Antigen H4 (H4) (Toxoplasma gondii).